The following is a 303-amino-acid chain: 2-dehydropantoate 2-reductase (303 aa).

Residues 7–12 (GCGALG), Asn-98, and Ala-122 each bind NADP(+). Residue Asn-98 participates in substrate binding. Catalysis depends on Lys-176, which acts as the Proton donor. Residues Asn-180, Asn-184, Asn-194, and Ser-244 each coordinate substrate. Glu-256 provides a ligand contact to NADP(+).

It belongs to the ketopantoate reductase family. As to quaternary structure, monomer.

The protein localises to the cytoplasm. It catalyses the reaction (R)-pantoate + NADP(+) = 2-dehydropantoate + NADPH + H(+). It participates in cofactor biosynthesis; (R)-pantothenate biosynthesis; (R)-pantoate from 3-methyl-2-oxobutanoate: step 2/2. Catalyzes the NADPH-dependent reduction of ketopantoate into pantoic acid. This chain is 2-dehydropantoate 2-reductase (panE), found in Shigella flexneri.